Consider the following 255-residue polypeptide: Probable iron chelatin transport ATP-binding protein HP_0888 (255 aa).

An ABC transporter domain is found at 3–240; that stretch reads LEVKNLSFKY…HNLSALYDTP (238 aa). ATP is bound at residue 35–42; the sequence is APNGSGKT.

The protein belongs to the ABC transporter superfamily.

It localises to the cell inner membrane. Functionally, part of a binding-protein-dependent transport system for an iron chelatin. Probably responsible for energy coupling to the transport system (Potential). This chain is Probable iron chelatin transport ATP-binding protein HP_0888, found in Helicobacter pylori (strain ATCC 700392 / 26695) (Campylobacter pylori).